A 248-amino-acid chain; its full sequence is UPF0736 protein ABC2536 (248 aa).

Belongs to the UPF0736 family.

The polypeptide is UPF0736 protein ABC2536 (Shouchella clausii (strain KSM-K16) (Alkalihalobacillus clausii)).